Consider the following 532-residue polypeptide: P granule abnormality protein 2 (532 aa).

Interacts with pgl-1 and pgl-3; association with either pgl-1 or pgl-3 is not required for P-granule localization. In terms of tissue distribution, highly expressed in the germline.

It localises to the cytoplasmic granule. Transient component of P-granule which is involved in germline development. This Caenorhabditis elegans protein is P granule abnormality protein 2.